A 513-amino-acid polypeptide reads, in one-letter code: Ribonuclease Y (513 aa).

The helical transmembrane segment at 4-24 (TTSLIIAILAGILGIVIGFFF) threads the bilayer. Residues 78 to 106 (KSRLKEISRQEDRLNSKEENLERKNASLE) form a disordered region. Residues 203 to 288 (TVSVVNLPND…EMVEKARKDV (86 aa)) enclose the KH domain. The HD domain occupies 329-422 (VLKHSIEVSN…VQSADAISAA (94 aa)).

Belongs to the RNase Y family.

It is found in the cell membrane. Its function is as follows. Endoribonuclease that initiates mRNA decay. This chain is Ribonuclease Y, found in Finegoldia magna (strain ATCC 29328 / DSM 20472 / WAL 2508) (Peptostreptococcus magnus).